Consider the following 1168-residue polypeptide: DNA-directed RNA polymerase subunit beta (1168 aa).

This sequence belongs to the RNA polymerase beta chain family. As to quaternary structure, the RNAP catalytic core consists of 2 alpha, 1 beta, 1 beta' and 1 omega subunit. When a sigma factor is associated with the core the holoenzyme is formed, which can initiate transcription.

It catalyses the reaction RNA(n) + a ribonucleoside 5'-triphosphate = RNA(n+1) + diphosphate. In terms of biological role, DNA-dependent RNA polymerase catalyzes the transcription of DNA into RNA using the four ribonucleoside triphosphates as substrates. The protein is DNA-directed RNA polymerase subunit beta of Rhodococcus opacus (strain B4).